The following is a 1037-amino-acid chain: Glycine dehydrogenase (decarboxylating) 1, mitochondrial (1037 aa).

A mitochondrion-targeting transit peptide spans 1 to 67; the sequence is MERARRLAYR…AFGRHQQTRS (67 aa). C98 carries the S-glutathionyl cysteine; transient modification. An S-glutathionyl cysteine mark is found at C402 and C463. An N6-(pyridoxal phosphate)lysine modification is found at K774. An S-glutathionyl cysteine; transient mark is found at C777, C943, and C1022.

It belongs to the GcvP family. Homodimer. The glycine cleavage system is composed of four proteins: P, T, L and H. Pyridoxal 5'-phosphate serves as cofactor. Glutathionylated at Cys-98, Cys-777, Cys-943 and Cys-1022 after S-nitrosoglutathione treatment. In terms of processing, S-nitrosylated at unknown positions by nitric oxide. Expressed in leaves. Detected in roots, stems, flowers and siliques.

It is found in the mitochondrion. It catalyses the reaction N(6)-[(R)-lipoyl]-L-lysyl-[glycine-cleavage complex H protein] + glycine + H(+) = N(6)-[(R)-S(8)-aminomethyldihydrolipoyl]-L-lysyl-[glycine-cleavage complex H protein] + CO2. With respect to regulation, inhibited by harpin, S-nitrosoglutathione (GSNO), nitric oxide, N-ethylmaleimide and 5,5'-dithiobis-(2-nitrobenzoic acid). In terms of biological role, the glycine decarboxylase (GDC) or glycine cleavage system catalyzes the degradation of glycine. The P protein binds the alpha-amino group of glycine through its pyridoxal phosphate cofactor; CO(2) is released and the remaining methylamine moiety is then transferred to the lipoamide cofactor of the H protein. This is Glycine dehydrogenase (decarboxylating) 1, mitochondrial (GLDP1) from Arabidopsis thaliana (Mouse-ear cress).